The chain runs to 198 residues: Acireductone dioxygenase 2 (198 aa).

Positions 99, 101, 105, and 144 each coordinate Fe(2+). Residues His99, His101, Glu105, and His144 each coordinate Ni(2+).

This sequence belongs to the acireductone dioxygenase (ARD) family. Fe(2+) is required as a cofactor. The cofactor is Ni(2+). In terms of tissue distribution, ubiquitous.

It is found in the cytoplasm. The protein localises to the nucleus. It catalyses the reaction 1,2-dihydroxy-5-(methylsulfanyl)pent-1-en-3-one + O2 = 4-methylsulfanyl-2-oxobutanoate + formate + 2 H(+). It carries out the reaction 1,2-dihydroxy-5-(methylsulfanyl)pent-1-en-3-one + O2 = 3-(methylsulfanyl)propanoate + CO + formate + 2 H(+). The protein operates within amino-acid biosynthesis; L-methionine biosynthesis via salvage pathway; L-methionine from S-methyl-5-thio-alpha-D-ribose 1-phosphate: step 5/6. In terms of biological role, catalyzes 2 different reactions between oxygen and the acireductone 1,2-dihydroxy-3-keto-5-methylthiopentene (DHK-MTPene) depending upon the metal bound in the active site. Fe-containing acireductone dioxygenase (Fe-ARD) produces formate and 2-keto-4-methylthiobutyrate (KMTB), the alpha-ketoacid precursor of methionine in the methionine recycle pathway. Ni-containing acireductone dioxygenase (Ni-ARD) produces methylthiopropionate, carbon monoxide and formate, and does not lie on the methionine recycle pathway. The polypeptide is Acireductone dioxygenase 2 (ARD2) (Oryza sativa subsp. indica (Rice)).